We begin with the raw amino-acid sequence, 269 residues long: Indole-3-glycerol phosphate synthase (269 aa).

It belongs to the TrpC family.

The catalysed reaction is 1-(2-carboxyphenylamino)-1-deoxy-D-ribulose 5-phosphate + H(+) = (1S,2R)-1-C-(indol-3-yl)glycerol 3-phosphate + CO2 + H2O. It functions in the pathway amino-acid biosynthesis; L-tryptophan biosynthesis; L-tryptophan from chorismate: step 4/5. This chain is Indole-3-glycerol phosphate synthase, found in Rhodococcus jostii (strain RHA1).